We begin with the raw amino-acid sequence, 1444 residues long: DNA polymerase III PolC-type (1444 aa).

In terms of domain architecture, Exonuclease spans 428–584 (YCVFDVETTG…FDAEATAYLA (157 aa)).

Belongs to the DNA polymerase type-C family. PolC subfamily.

The protein localises to the cytoplasm. The catalysed reaction is DNA(n) + a 2'-deoxyribonucleoside 5'-triphosphate = DNA(n+1) + diphosphate. Required for replicative DNA synthesis. This DNA polymerase also exhibits 3' to 5' exonuclease activity. The sequence is that of DNA polymerase III PolC-type from Listeria innocua serovar 6a (strain ATCC BAA-680 / CLIP 11262).